The following is a 251-amino-acid chain: Vitamin B12 import ATP-binding protein BtuD (251 aa).

The ABC transporter domain maps to 2 to 236 (IRVNSLQVDS…EVLQSVFGTS (235 aa)). 30-37 (GPNGCGKS) is an ATP binding site.

The protein belongs to the ABC transporter superfamily. Vitamin B12 importer (TC 3.A.1.13.1) family. As to quaternary structure, the complex is composed of two ATP-binding proteins (BtuD), two transmembrane proteins (BtuC) and a solute-binding protein (BtuF).

Its subcellular location is the cell inner membrane. The catalysed reaction is an R-cob(III)alamin(out) + ATP + H2O = an R-cob(III)alamin(in) + ADP + phosphate + H(+). Its function is as follows. Part of the ABC transporter complex BtuCDF involved in vitamin B12 import. Responsible for energy coupling to the transport system. The chain is Vitamin B12 import ATP-binding protein BtuD from Vibrio cholerae serotype O1 (strain ATCC 39315 / El Tor Inaba N16961).